Here is a 356-residue protein sequence, read N- to C-terminus: sn-glycerol-3-phosphate import ATP-binding protein UgpC (356 aa).

In terms of domain architecture, ABC transporter spans Leu4–Ile235. Gly37–Ser44 contacts ATP.

Belongs to the ABC transporter superfamily. sn-glycerol-3-phosphate importer (TC 3.A.1.1.3) family. The complex is composed of two ATP-binding proteins (UgpC), two transmembrane proteins (UgpA and UgpE) and a solute-binding protein (UgpB).

It localises to the cell inner membrane. It carries out the reaction sn-glycerol 3-phosphate(out) + ATP + H2O = sn-glycerol 3-phosphate(in) + ADP + phosphate + H(+). Functionally, part of the ABC transporter complex UgpBAEC involved in sn-glycerol-3-phosphate (G3P) import. Responsible for energy coupling to the transport system. The protein is sn-glycerol-3-phosphate import ATP-binding protein UgpC of Salmonella typhimurium (strain LT2 / SGSC1412 / ATCC 700720).